The chain runs to 466 residues: Asparagine--tRNA ligase (466 aa).

It belongs to the class-II aminoacyl-tRNA synthetase family. Homodimer.

It is found in the cytoplasm. It catalyses the reaction tRNA(Asn) + L-asparagine + ATP = L-asparaginyl-tRNA(Asn) + AMP + diphosphate + H(+). The sequence is that of Asparagine--tRNA ligase from Shewanella sp. (strain MR-7).